The chain runs to 307 residues: Ornithine carbamoyltransferase (307 aa).

Carbamoyl phosphate is bound by residues 55–58, glutamine 82, arginine 106, and 133–136; these read STRT and HPCQ. L-ornithine-binding positions include asparagine 164, aspartate 224, and 228–229; that span reads SM. Residues 263–264 and arginine 291 each bind carbamoyl phosphate; that span reads CL.

It belongs to the aspartate/ornithine carbamoyltransferase superfamily. OTCase family.

It is found in the cytoplasm. The catalysed reaction is carbamoyl phosphate + L-ornithine = L-citrulline + phosphate + H(+). The protein operates within amino-acid biosynthesis; L-arginine biosynthesis; L-arginine from L-ornithine and carbamoyl phosphate: step 1/3. In terms of biological role, reversibly catalyzes the transfer of the carbamoyl group from carbamoyl phosphate (CP) to the N(epsilon) atom of ornithine (ORN) to produce L-citrulline. In Bradyrhizobium diazoefficiens (strain JCM 10833 / BCRC 13528 / IAM 13628 / NBRC 14792 / USDA 110), this protein is Ornithine carbamoyltransferase.